The sequence spans 72 residues: Translation initiation factor IF-1 (72 aa).

The region spanning Met-1–Lys-72 is the S1-like domain.

The protein belongs to the IF-1 family. In terms of assembly, component of the 30S ribosomal translation pre-initiation complex which assembles on the 30S ribosome in the order IF-2 and IF-3, IF-1 and N-formylmethionyl-tRNA(fMet); mRNA recruitment can occur at any time during PIC assembly.

It localises to the cytoplasm. Its function is as follows. One of the essential components for the initiation of protein synthesis. Stabilizes the binding of IF-2 and IF-3 on the 30S subunit to which N-formylmethionyl-tRNA(fMet) subsequently binds. Helps modulate mRNA selection, yielding the 30S pre-initiation complex (PIC). Upon addition of the 50S ribosomal subunit IF-1, IF-2 and IF-3 are released leaving the mature 70S translation initiation complex. The chain is Translation initiation factor IF-1 from Helicobacter pylori (strain HPAG1).